The sequence spans 410 residues: Shaggy-related protein kinase epsilon (410 aa).

The residue at position 2 (A2) is an N-acetylalanine. Positions 74–358 (YMAERIVGQG…AMEAIVHPFF (285 aa)) constitute a Protein kinase domain. ATP-binding positions include 80 to 88 (VGQGSFGIV) and K103. The active-site Proton acceptor is the D199. Y234 is modified (phosphotyrosine).

The protein belongs to the protein kinase superfamily. CMGC Ser/Thr protein kinase family. GSK-3 subfamily. Binds to KIB1. Autophosphorylated mainly on threonine and serine residues.

The enzyme catalyses L-seryl-[protein] + ATP = O-phospho-L-seryl-[protein] + ADP + H(+). The catalysed reaction is L-threonyl-[protein] + ATP = O-phospho-L-threonyl-[protein] + ADP + H(+). In terms of biological role, may mediate extracellular signals to regulate transcription in differentiating cells. This Arabidopsis thaliana (Mouse-ear cress) protein is Shaggy-related protein kinase epsilon (ASK5).